A 258-amino-acid chain; its full sequence is Ubiquinone/menaquinone biosynthesis C-methyltransferase UbiE (258 aa).

A disordered region spans residues 1–20; it reads MSESRTSADGGMETSYGFRE. Residues threonine 81, aspartate 102, and 130 to 131 each bind S-adenosyl-L-methionine; that span reads NA.

Belongs to the class I-like SAM-binding methyltransferase superfamily. MenG/UbiE family.

It catalyses the reaction a 2-demethylmenaquinol + S-adenosyl-L-methionine = a menaquinol + S-adenosyl-L-homocysteine + H(+). It carries out the reaction a 2-methoxy-6-(all-trans-polyprenyl)benzene-1,4-diol + S-adenosyl-L-methionine = a 5-methoxy-2-methyl-3-(all-trans-polyprenyl)benzene-1,4-diol + S-adenosyl-L-homocysteine + H(+). The protein operates within quinol/quinone metabolism; menaquinone biosynthesis; menaquinol from 1,4-dihydroxy-2-naphthoate: step 2/2. It functions in the pathway cofactor biosynthesis; ubiquinone biosynthesis. In terms of biological role, methyltransferase required for the conversion of demethylmenaquinol (DMKH2) to menaquinol (MKH2) and the conversion of 2-polyprenyl-6-methoxy-1,4-benzoquinol (DDMQH2) to 2-polyprenyl-3-methyl-6-methoxy-1,4-benzoquinol (DMQH2). The chain is Ubiquinone/menaquinone biosynthesis C-methyltransferase UbiE from Rhizobium etli (strain ATCC 51251 / DSM 11541 / JCM 21823 / NBRC 15573 / CFN 42).